A 473-amino-acid polypeptide reads, in one-letter code: Cell division protein FtsP (473 aa).

A signal peptide (tat-type signal) is located at residues 1-27 (MSFSRRQFLQASGLAVCLGSLSSSVRA).

Belongs to the FtsP family. Predicted to be exported by the Tat system. The position of the signal peptide cleavage has not been experimentally proven.

It is found in the periplasm. Its function is as follows. Cell division protein that is required for growth during stress conditions. May be involved in protecting or stabilizing the divisomal assembly under conditions of stress. This chain is Cell division protein FtsP, found in Proteus mirabilis (strain HI4320).